Here is a 400-residue protein sequence, read N- to C-terminus: Deoxyguanosinetriphosphate triphosphohydrolase-like protein (400 aa).

In terms of domain architecture, HD spans arginine 73 to asparagine 215.

This sequence belongs to the dGTPase family. Type 2 subfamily.

The chain is Deoxyguanosinetriphosphate triphosphohydrolase-like protein from Bartonella henselae (strain ATCC 49882 / DSM 28221 / CCUG 30454 / Houston 1) (Rochalimaea henselae).